Consider the following 277-residue polypeptide: Indole-3-glycerol phosphate synthase (277 aa).

It belongs to the TrpC family.

The enzyme catalyses 1-(2-carboxyphenylamino)-1-deoxy-D-ribulose 5-phosphate + H(+) = (1S,2R)-1-C-(indol-3-yl)glycerol 3-phosphate + CO2 + H2O. It participates in amino-acid biosynthesis; L-tryptophan biosynthesis; L-tryptophan from chorismate: step 4/5. In Pseudomonas putida (strain W619), this protein is Indole-3-glycerol phosphate synthase.